The chain runs to 855 residues: Protein translocase subunit SecA (855 aa).

ATP-binding positions include Gln88, 106–110 (GEGKT), and Asp509. A disordered region spans residues 815–837 (EANLQNKFEKKPARNEPCPCGSG). Residues Cys832, Cys834, Cys843, and Cys844 each contribute to the Zn(2+) site.

It belongs to the SecA family. As to quaternary structure, monomer and homodimer. Part of the essential Sec protein translocation apparatus which comprises SecA, SecYEG and auxiliary proteins SecDF-YajC and YidC. The cofactor is Zn(2+).

It localises to the cell inner membrane. The protein resides in the cytoplasm. The catalysed reaction is ATP + H2O + cellular proteinSide 1 = ADP + phosphate + cellular proteinSide 2.. Part of the Sec protein translocase complex. Interacts with the SecYEG preprotein conducting channel. Has a central role in coupling the hydrolysis of ATP to the transfer of proteins into and across the cell membrane, serving as an ATP-driven molecular motor driving the stepwise translocation of polypeptide chains across the membrane. This Campylobacter fetus subsp. fetus (strain 82-40) protein is Protein translocase subunit SecA.